Here is a 160-residue protein sequence, read N- to C-terminus: Ribosome maturation factor RimP (160 aa).

This sequence belongs to the RimP family.

It localises to the cytoplasm. Required for maturation of 30S ribosomal subunits. The protein is Ribosome maturation factor RimP of Citrifermentans bemidjiense (strain ATCC BAA-1014 / DSM 16622 / JCM 12645 / Bem) (Geobacter bemidjiensis).